The following is a 209-amino-acid chain: Thiamine-phosphate synthase (209 aa).

Residues 38-42 and N70 contribute to the 4-amino-2-methyl-5-(diphosphooxymethyl)pyrimidine site; that span reads QYRAK. 2 residues coordinate Mg(2+): D71 and D90. 4-amino-2-methyl-5-(diphosphooxymethyl)pyrimidine is bound at residue S109. 2-[(2R,5Z)-2-carboxy-4-methylthiazol-5(2H)-ylidene]ethyl phosphate is bound at residue 135–137; it reads TST. Residue K138 participates in 4-amino-2-methyl-5-(diphosphooxymethyl)pyrimidine binding. Residues G165 and 185–186 contribute to the 2-[(2R,5Z)-2-carboxy-4-methylthiazol-5(2H)-ylidene]ethyl phosphate site; that span reads VS.

The protein belongs to the thiamine-phosphate synthase family. Mg(2+) is required as a cofactor.

The catalysed reaction is 2-[(2R,5Z)-2-carboxy-4-methylthiazol-5(2H)-ylidene]ethyl phosphate + 4-amino-2-methyl-5-(diphosphooxymethyl)pyrimidine + 2 H(+) = thiamine phosphate + CO2 + diphosphate. It catalyses the reaction 2-(2-carboxy-4-methylthiazol-5-yl)ethyl phosphate + 4-amino-2-methyl-5-(diphosphooxymethyl)pyrimidine + 2 H(+) = thiamine phosphate + CO2 + diphosphate. The enzyme catalyses 4-methyl-5-(2-phosphooxyethyl)-thiazole + 4-amino-2-methyl-5-(diphosphooxymethyl)pyrimidine + H(+) = thiamine phosphate + diphosphate. Its pathway is cofactor biosynthesis; thiamine diphosphate biosynthesis; thiamine phosphate from 4-amino-2-methyl-5-diphosphomethylpyrimidine and 4-methyl-5-(2-phosphoethyl)-thiazole: step 1/1. Functionally, condenses 4-methyl-5-(beta-hydroxyethyl)thiazole monophosphate (THZ-P) and 2-methyl-4-amino-5-hydroxymethyl pyrimidine pyrophosphate (HMP-PP) to form thiamine monophosphate (TMP). The sequence is that of Thiamine-phosphate synthase from Persephonella marina (strain DSM 14350 / EX-H1).